Here is a 65-residue protein sequence, read N- to C-terminus: MPKMKTKKAAAKRFKATGTGKLKRGKAFRSHILTKKSTKTKRNLRKGGYVSETQEKTMKTLLPYL.

This sequence belongs to the bacterial ribosomal protein bL35 family.

The chain is Large ribosomal subunit protein bL35 from Clostridium acetobutylicum (strain ATCC 824 / DSM 792 / JCM 1419 / IAM 19013 / LMG 5710 / NBRC 13948 / NRRL B-527 / VKM B-1787 / 2291 / W).